Consider the following 424-residue polypeptide: Histidine--tRNA ligase (424 aa).

The protein belongs to the class-II aminoacyl-tRNA synthetase family. As to quaternary structure, homodimer.

The protein localises to the cytoplasm. It carries out the reaction tRNA(His) + L-histidine + ATP = L-histidyl-tRNA(His) + AMP + diphosphate + H(+). The polypeptide is Histidine--tRNA ligase (Salmonella paratyphi A (strain ATCC 9150 / SARB42)).